Here is a 431-residue protein sequence, read N- to C-terminus: Enolase (431 aa).

Gln-167 contributes to the (2R)-2-phosphoglycerate binding site. Catalysis depends on Glu-209, which acts as the Proton donor. Positions 246, 289, and 316 each coordinate Mg(2+). (2R)-2-phosphoglycerate is bound by residues Lys-341, Arg-370, Ser-371, and Lys-392. The active-site Proton acceptor is Lys-341.

Belongs to the enolase family. Component of the RNA degradosome, a multiprotein complex involved in RNA processing and mRNA degradation. Mg(2+) serves as cofactor.

Its subcellular location is the cytoplasm. The protein localises to the secreted. The protein resides in the cell surface. The catalysed reaction is (2R)-2-phosphoglycerate = phosphoenolpyruvate + H2O. The protein operates within carbohydrate degradation; glycolysis; pyruvate from D-glyceraldehyde 3-phosphate: step 4/5. Functionally, catalyzes the reversible conversion of 2-phosphoglycerate (2-PG) into phosphoenolpyruvate (PEP). It is essential for the degradation of carbohydrates via glycolysis. This is Enolase from Shewanella putrefaciens (strain CN-32 / ATCC BAA-453).